The sequence spans 244 residues: Large ribosomal subunit protein uL30 (244 aa).

The protein belongs to the universal ribosomal protein uL30 family.

The polypeptide is Large ribosomal subunit protein uL30 (RPL7) (Candida glabrata (strain ATCC 2001 / BCRC 20586 / JCM 3761 / NBRC 0622 / NRRL Y-65 / CBS 138) (Yeast)).